Consider the following 276-residue polypeptide: Exosome complex component Rrp42 (276 aa).

Belongs to the RNase PH family. Rrp42 subfamily. Component of the archaeal exosome complex. Forms a hexameric ring-like arrangement composed of 3 Rrp41-Rrp42 heterodimers. The hexameric ring associates with a trimer of Rrp4 and/or Csl4 subunits.

The protein localises to the cytoplasm. Its function is as follows. Non-catalytic component of the exosome, which is a complex involved in RNA degradation. Contributes to the structuring of the Rrp41 active site. This chain is Exosome complex component Rrp42, found in Aeropyrum pernix (strain ATCC 700893 / DSM 11879 / JCM 9820 / NBRC 100138 / K1).